The primary structure comprises 488 residues: UDP-glycosyltransferase 92A1 (488 aa).

UDP-alpha-D-glucose contacts are provided by residues S292, 358–360 (APQ), 375–383 (HCGWNSILE), and 397–400 (AAEQ).

Belongs to the UDP-glycosyltransferase family.

This chain is UDP-glycosyltransferase 92A1 (UGT92A1), found in Arabidopsis thaliana (Mouse-ear cress).